The following is a 132-amino-acid chain: Small ribosomal subunit protein uS8 (132 aa).

This sequence belongs to the universal ribosomal protein uS8 family. Part of the 30S ribosomal subunit. Contacts proteins S5 and S12.

Functionally, one of the primary rRNA binding proteins, it binds directly to 16S rRNA central domain where it helps coordinate assembly of the platform of the 30S subunit. The chain is Small ribosomal subunit protein uS8 from Francisella tularensis subsp. holarctica (strain FTNF002-00 / FTA).